The chain runs to 213 residues: Protein FAM156A/FAM156B (213 aa).

Methionine 1 bears the N-acetylmethionine mark. Residues 1 to 62 form a disordered region; sequence MDPLQKRNPA…SQAVPLPEGL (62 aa). Residues 8-37 show a composition bias toward polar residues; sequence NPASPSKSSPMTAAETSQEGPAPSQPSYSE. Serine 114 is modified (phosphoserine). A helical membrane pass occupies residues 154–170; the sequence is WETLVQGLSGLTLSLGT. A disordered region spans residues 165–198; it reads TLSLGTNQPGPLPEAALQPQETEEKRQRERQQES. Over residues 186 to 197 the composition is skewed to basic and acidic residues; that stretch reads TEEKRQRERQQE.

Its subcellular location is the membrane. The chain is Protein FAM156A/FAM156B (FAM156A) from Homo sapiens (Human).